A 154-amino-acid polypeptide reads, in one-letter code: NADPH-dependent 7-cyano-7-deazaguanine reductase (154 aa).

The active-site Thioimide intermediate is the cysteine 52. The active-site Proton donor is the aspartate 59. Substrate-binding positions include 74 to 76 (VES) and 93 to 94 (HE).

This sequence belongs to the GTP cyclohydrolase I family. QueF type 1 subfamily.

It localises to the cytoplasm. The enzyme catalyses 7-aminomethyl-7-carbaguanine + 2 NADP(+) = 7-cyano-7-deazaguanine + 2 NADPH + 3 H(+). It participates in tRNA modification; tRNA-queuosine biosynthesis. Functionally, catalyzes the NADPH-dependent reduction of 7-cyano-7-deazaguanine (preQ0) to 7-aminomethyl-7-deazaguanine (preQ1). The chain is NADPH-dependent 7-cyano-7-deazaguanine reductase from Ruegeria sp. (strain TM1040) (Silicibacter sp.).